The chain runs to 634 residues: Probable potassium transport system protein Kup (634 aa).

Transmembrane regions (helical) follow at residues 19–39, 62–82, 113–133, 150–170, 177–197, 225–245, 259–279, 291–311, 349–369, 379–399, 406–426, and 431–451; these read AVGL…TSPL, VLSL…VIFV, FVVV…MITP, GLEH…FLIQ, IGIL…ALGV, IGVA…ALYA, WFLL…ATIL, LLAP…ATVI, IYIG…VLGF, YGVA…VVIW, LWLG…FFAA, and VVQG…LMST.

Belongs to the HAK/KUP transporter (TC 2.A.72) family.

Its subcellular location is the cell inner membrane. It carries out the reaction K(+)(in) + H(+)(in) = K(+)(out) + H(+)(out). Functionally, transport of potassium into the cell. Likely operates as a K(+):H(+) symporter. This chain is Probable potassium transport system protein Kup, found in Pseudomonas paraeruginosa (strain DSM 24068 / PA7) (Pseudomonas aeruginosa (strain PA7)).